Here is a 269-residue protein sequence, read N- to C-terminus: 1-(5-phosphoribosyl)-5-[(5-phosphoribosylamino)methylideneamino] imidazole-4-carboxamide isomerase (269 aa).

Asp10 serves as the catalytic Proton acceptor. Residue Asp132 is the Proton donor of the active site.

This sequence belongs to the HisA/HisF family.

It localises to the cytoplasm. It catalyses the reaction 1-(5-phospho-beta-D-ribosyl)-5-[(5-phospho-beta-D-ribosylamino)methylideneamino]imidazole-4-carboxamide = 5-[(5-phospho-1-deoxy-D-ribulos-1-ylimino)methylamino]-1-(5-phospho-beta-D-ribosyl)imidazole-4-carboxamide. Its pathway is amino-acid biosynthesis; L-histidine biosynthesis; L-histidine from 5-phospho-alpha-D-ribose 1-diphosphate: step 4/9. The polypeptide is 1-(5-phosphoribosyl)-5-[(5-phosphoribosylamino)methylideneamino] imidazole-4-carboxamide isomerase (Xylella fastidiosa (strain Temecula1 / ATCC 700964)).